The primary structure comprises 267 residues: tRNA pseudouridine synthase A (267 aa).

The Nucleophile role is filled by D55. Substrate is bound at residue Y109.

It belongs to the tRNA pseudouridine synthase TruA family.

The enzyme catalyses uridine(38/39/40) in tRNA = pseudouridine(38/39/40) in tRNA. Functionally, formation of pseudouridine at positions 38, 39 and 40 in the anticodon stem and loop of transfer RNAs. The protein is tRNA pseudouridine synthase A of Natronomonas pharaonis (strain ATCC 35678 / DSM 2160 / CIP 103997 / JCM 8858 / NBRC 14720 / NCIMB 2260 / Gabara) (Halobacterium pharaonis).